The sequence spans 1754 residues: MSSMKWLSATAVFAAVLPSVSGFCFPEPKELNFSRVGTSSSTTFTETVGEAGAEYIVSGNASFTKFTNIPTTDTTTPTNSNSSSSNGETASVSEDSDSTTTTPDPKGGGAFYNAHSGVLSFMTRSGTEGSLTLSEIKITGEGGAIFSQGELLFTDLTGLTIQNNLSQLSGGAIFGESTISLSGITKATFSSNSAEVPAPVKKPTEPKAQTASETSGSSSSSGNDSVSSPSSSRAEPAAANLQSHFICATATPAAQTDTETSTPSHKPGSGGAIYAKGDLTIADSQEVLFSINKATKDGGAIFAEKDVSFENITSLKVQTNGAEEKGGAIYAKGDLSIQSSKQSLFNSNYSKQGGGALYVEGDINFQDLEEIRIKYNKAGTFETKKITLPKAQASAGNADAWASSSPQSGSGATTVSNSGDSSSGSDSDTSETVPATAKGGGLYTDKNLSITNITGIIEIANNKATDVGGGAYVKGTLTCENSHRLQFLKNSSDKQGGGIYGEDNITLSNLTGKTLFQENTAKEEGGGLFIKGTDKALTMTGLDSFCLINNTSEKHGGGAFVTKEISQTYTSDVETIPGITPVHGETVITGNKSTGGNGGGVCTKRLALSNLQSISISGNSAAENGGGAHTCPDSFPTADTAEQPAAASAATSTPESAPVVSTALSTPSSSTVSSLTLLAASSQASPATSNKETQDPNADTDLLIDYVVDTTISKNTAKKGGGIYAKKAKMSRIDQLNISENSATEIGGGICCKESLELDALVSLSVTENLVGKEGGGLHAKTVNISNLKSGFSFSNNKANSSSTGVATTASAPAAAAASLQAAAAAVPSSPATPTYSGVVGGAIYGEKVTFSQCSGTCQFSGNQAIDNNPSQSSLNVQGGAIYAKTSLSIGSSDAGTSYIFSGNSVSTGKSQTTGQIAGGAIYSPTVTLNCPATFSNNTASMATPKTSSEDGSSGNSIKDTIGGAIAGTAITLSGVSRFSGNTADLGAAIGTLANANTPSATSGSQNSITEKITLENGSFIFERNQANKRGAIYSPSVSIKGNNITFNQNTSTHDGSAIYFTKDATIESLGSVLFTGNNVTATQASSATSGQNTNTANYGAAIFGDPGTTQSSQTDAILTLLASSGNITFSNNSLQNNQGDTPASKFCSIAGYVKLSLQAAKGKTISFFDCVHTSTKKIGSTQNVYETLDINKEENSNPYTGTIVFSSELHENKSYIPQNAILHNGTLVLKEKTELHVVSFEQKEGSKLIMKPGAVLSNQNIANGALVINGLTIDLSSMGTPQAGEIFSPPELRIVATTSSASGGSGVSSSIPTNPKRISAAAPSGSAATTPTMSENKVFLTGDLTLIDPNGNFYQNPMLGSDLDVPLIKLPTNTSDVQVYDLTLSGDLFPQKGYMGTWTLDSNPQTGKLQARWTFDTYRRWVYIPRDNHFYANSILGSQNSMIVVKQGLINNMLNNARFDDIAYNNFWVSGVGTFLAQQGTPLSEEFSYYSRGTSVAIDAKPRQDFILGAAFSKMVGKTKAIKKMHNYFHKGSEYSYQASVYGGKFLYFLLNKQHGWALPFLIQGVVSYGHIKHDTTTLYPSIHERNKGDWEDLGWLADLRISMDLKEPSKDSSKRITVYGELEYSSIRQKQFTEIDYDPRHFDDCAYRNLSLPVGCAVEGAIMNCNILMYNKLALAYMPSIYRNNPVCKYRVLSSNEAGQVICGVPTRTSARAEYSTQLYLGPFWTLYGNYTIDVGMYTLSQMTSCGARMIF.

The first 14 residues, 1-14 (MSSMKWLSATAVFA), serve as a signal peptide directing secretion. Low complexity-rich tracts occupy residues 68-105 (NIPT…TPDP) and 212-232 (SETS…PSSS). 6 disordered regions span residues 68–109 (NIPT…KGGG), 190–235 (SSNS…SRAE), 252–271 (PAAQ…GSGG), 397–438 (NADA…ATAK), 621–668 (AAEN…STPS), and 1299–1332 (TSSA…ATTP). Composition is skewed to polar residues over residues 252–264 (PAAQ…STPS) and 402–412 (ASSSPQSGSGA). Composition is skewed to low complexity over residues 413-427 (TTVS…GSDS), 636-668 (PTAD…STPS), 1299-1311 (TSSA…VSSS), and 1320-1332 (SAAA…ATTP). The Autotransporter domain maps to 1461-1754 (DDIAYNNFWV…MTSCGARMIF (294 aa)).

This sequence belongs to the PMP outer membrane protein family.

The protein localises to the secreted. The protein resides in the cell wall. It localises to the cell outer membrane. The polypeptide is Probable outer membrane protein PmpB (pmpB) (Chlamydia trachomatis serovar D (strain ATCC VR-885 / DSM 19411 / UW-3/Cx)).